We begin with the raw amino-acid sequence, 247 residues long: Ribonuclease 3 (247 aa).

The region spanning 23 to 149 (HADLLERLGV…LLGAIFRQHG (127 aa)) is the RNase III domain. Position 62 (Glu62) interacts with Mg(2+). Asp66 is a catalytic residue. 2 residues coordinate Mg(2+): Asp135 and Glu138. Residue Glu138 is part of the active site. In terms of domain architecture, DRBM spans 176–244 (DWKTTLQEEL…ARQAFLKLRE (69 aa)).

It belongs to the ribonuclease III family. In terms of assembly, homodimer. Mg(2+) is required as a cofactor.

Its subcellular location is the cytoplasm. The enzyme catalyses Endonucleolytic cleavage to 5'-phosphomonoester.. Functionally, digests double-stranded RNA. Involved in the processing of primary rRNA transcript to yield the immediate precursors to the large and small rRNAs (23S and 16S). Processes some mRNAs, and tRNAs when they are encoded in the rRNA operon. Processes pre-crRNA and tracrRNA of type II CRISPR loci if present in the organism. This chain is Ribonuclease 3, found in Corynebacterium efficiens (strain DSM 44549 / YS-314 / AJ 12310 / JCM 11189 / NBRC 100395).